Reading from the N-terminus, the 147-residue chain is Large ribosomal subunit protein uL11 (147 aa).

It belongs to the universal ribosomal protein uL11 family. Part of the ribosomal stalk of the 50S ribosomal subunit. Interacts with L10 and the large rRNA to form the base of the stalk. L10 forms an elongated spine to which L12 dimers bind in a sequential fashion forming a multimeric L10(L12)X complex. In terms of processing, one or more lysine residues are methylated.

Its function is as follows. Forms part of the ribosomal stalk which helps the ribosome interact with GTP-bound translation factors. The polypeptide is Large ribosomal subunit protein uL11 (Thermus thermophilus (strain ATCC BAA-163 / DSM 7039 / HB27)).